We begin with the raw amino-acid sequence, 56 residues long: Protein hunchback (56 aa).

C2H2-type zinc fingers lie at residues 1-5, 11-33, and 39-56; these read HVRNH, HKCGKCNYSCVNKSMLNSHMKSH, and YRCADCTYATKYCHSLKL.

This sequence belongs to the hunchback C2H2-type zinc-finger protein family.

Its subcellular location is the nucleus. Its function is as follows. Gap class segmentation protein that controls development of head structures. In Bithynia tentaculata (Spire snail), this protein is Protein hunchback (hb).